We begin with the raw amino-acid sequence, 469 residues long: Uronate isomerase (469 aa).

This sequence belongs to the metallo-dependent hydrolases superfamily. Uronate isomerase family.

It carries out the reaction D-glucuronate = D-fructuronate. The enzyme catalyses aldehydo-D-galacturonate = keto-D-tagaturonate. It participates in carbohydrate metabolism; pentose and glucuronate interconversion. This Pectobacterium carotovorum subsp. carotovorum (strain PC1) protein is Uronate isomerase.